The chain runs to 256 residues: Short-chain dehydrogenase/reductase cdmF (256 aa).

3 residues coordinate NADP(+): V11, D57, and R119. S137 (proton donor) is an active-site residue. Y151, K155, G183, and N187 together coordinate NADP(+). The Proton acceptor role is filled by Y151. K155 (lowers pKa of active site Tyr) is an active-site residue.

Belongs to the short-chain dehydrogenases/reductases (SDR) family.

It catalyses the reaction 3-hydroxypentacecilide A + A = chrodrimanin C + AH2. The catalysed reaction is chrodrimanin F + A = chrodrimanin H + AH2. Its pathway is secondary metabolite biosynthesis; terpenoid biosynthesis. Short-chain dehydrogenase/reductase; part of the gene cluster that mediates the biosynthesis of chrodrimanin B, a meroterpenoid that acts as a potent blocker of insect GABA-gated chloride channels. The first step of the pathway is the biosynthesis of 6-hydroxymellein by the polyketide synthase cdmE. The prenyltransferase cdmH acts as a 6-hydroxymellein 5-farnesyltransferase and produces the hydrophobic metabolite verruculide C. The FAD-dependent monooxygenase cdmI further converts verruculide C into verruculide B. The terpene cyclase cdmG then produced the pentacyclic molecule 3-hydroxypentacecilide A, the backbone structure of chrodrimanin B, via folding the farnesyl moiety of the substrate into the chair-boat conformation. The short-chain dehydrogenase/reductase cdmF functions as the 3-OH dehydrogenase that oxidizes the C-3 hydroxyl group of 3-hydroxypentacecilide A and produces chrodrimanin C, the dehydrogenated product of 3-hydroxypentacecilide A. The cytochrome P450 monooxygenase cdmJ then accepts both 3-hydroxypentacecilide A and chrodrimanin C and functions as a C-7-beta-hydroxylase to produce respectively chrodrimanin H and chrodrimanin F. The dioxygenase cdmA accepts chrodrimanin H to afford chrodrimanin E, which is further transformed to chrodrimanin A by the dioxygenase cdmD. CdmA can also accept chrodrimanin C as substrate to convert it into verruculide A, which is further converted into chrodrimanin T by cdmD. The last step of the biosynthesis is proposed to be performed by the acetyltransferase cdmC which acetylates chrodrimanin A to yield chrodrimanin B. The pathway may also lead to the production of additional shunt products, including chrodrimanins T and U. The protein is Short-chain dehydrogenase/reductase cdmF of Talaromyces verruculosus (Penicillium verruculosum).